The primary structure comprises 555 residues: Glutamine--tRNA ligase (555 aa).

The short motif at 34–44 is the 'HIGH' region element; it reads PEPNGYLHIGH. ATP is bound by residues 35-37 and 41-47; these read EPN and HIGHAKS. Residues Asp67 and Tyr212 each contribute to the L-glutamine site. ATP-binding positions include Thr231, 261–262, and 269–271; these read RL and MSK. The 'KMSKS' region motif lies at 268–272; it reads VMSKR.

Belongs to the class-I aminoacyl-tRNA synthetase family. Monomer.

The protein localises to the cytoplasm. The catalysed reaction is tRNA(Gln) + L-glutamine + ATP = L-glutaminyl-tRNA(Gln) + AMP + diphosphate. The protein is Glutamine--tRNA ligase of Cronobacter sakazakii (strain ATCC BAA-894) (Enterobacter sakazakii).